Consider the following 343-residue polypeptide: MSDELTTTVYYDEDADVSTINDETVAVLGYGSQGHAHALNLHESGVDVIVGLRQDSSSWADAEDAGLRVETPDVAAGEADRVVMLVPDTIQPAVYEAIEDELDAGDTLQFAHGFNIHYGQIEPPEDVDVTMVAPKSPGHLVRRTYERGEGTPGLIAVYQDATGNAKQESLAYAKGIGCTRAGVIETSFQEEVETDLFGEQAVLCGGVTEMVKAGFETLVDAGYAPEMAYFECLNELKLIVDLMYEGGHMGMWNSVSDTAEYGGLTRGEEVIDREGMEKILEEVQNGEFAREWINENQANRPAYKQYRDAEQNHQIEAVGENLRELFAWGEDADAETTEAPADD.

The KARI N-terminal Rossmann domain maps to 7–186; the sequence is TTVYYDEDAD…GCTRAGVIET (180 aa). NADP(+)-binding positions include 30–33, R53, S56, S58, and 88–91; these read YGSQ and DTIQ. Residue H112 is part of the active site. G138 contributes to the NADP(+) binding site. The region spanning 187–329 is the KARI C-terminal knotted domain; it reads SFQEEVETDL…ENLRELFAWG (143 aa). Mg(2+) is bound by residues D195, E199, E231, and E235. Position 256 (S256) interacts with substrate.

The protein belongs to the ketol-acid reductoisomerase family. It depends on Mg(2+) as a cofactor.

The enzyme catalyses (2R)-2,3-dihydroxy-3-methylbutanoate + NADP(+) = (2S)-2-acetolactate + NADPH + H(+). It catalyses the reaction (2R,3R)-2,3-dihydroxy-3-methylpentanoate + NADP(+) = (S)-2-ethyl-2-hydroxy-3-oxobutanoate + NADPH + H(+). It functions in the pathway amino-acid biosynthesis; L-isoleucine biosynthesis; L-isoleucine from 2-oxobutanoate: step 2/4. It participates in amino-acid biosynthesis; L-valine biosynthesis; L-valine from pyruvate: step 2/4. Functionally, involved in the biosynthesis of branched-chain amino acids (BCAA). Catalyzes an alkyl-migration followed by a ketol-acid reduction of (S)-2-acetolactate (S2AL) to yield (R)-2,3-dihydroxy-isovalerate. In the isomerase reaction, S2AL is rearranged via a Mg-dependent methyl migration to produce 3-hydroxy-3-methyl-2-ketobutyrate (HMKB). In the reductase reaction, this 2-ketoacid undergoes a metal-dependent reduction by NADPH to yield (R)-2,3-dihydroxy-isovalerate. This is Ketol-acid reductoisomerase (NADP(+)) from Haloarcula marismortui (strain ATCC 43049 / DSM 3752 / JCM 8966 / VKM B-1809) (Halobacterium marismortui).